A 173-amino-acid chain; its full sequence is Skp-like protein (173 aa).

Positions 1–19 (MKKFLLLSLMSLASSTVFA) are cleaved as a signal peptide.

The protein belongs to the Skp family.

This chain is Skp-like protein, found in Chlamydia muridarum (strain MoPn / Nigg).